Consider the following 248-residue polypeptide: Pulmonary surfactant-associated protein A (248 aa).

The N-terminal stretch at 1–20 is a signal peptide; it reads MSLGSLAFTLFLTVVAGIKC. N-linked (GlcNAc...) asparagine glycosylation occurs at N21. One can recognise a Collagen-like domain in the interval 28-100; the sequence is GSPGIPGTPG…PGERGLPGFP (73 aa). The tract at residues 28–100 is disordered; the sequence is GSPGIPGTPG…PGERGLPGFP (73 aa). 4-hydroxyproline occurs at positions 30, 33, 36, 42, 54, 57, 63, 67, 70, and 76. The span at 42–51 shows a compositional bias: basic and acidic residues; the sequence is PGRDGRDGIK. Residues 54-65 are compositionally biased toward pro residues; the sequence is PGPPGPMGPPGG. Positions 69-82 are enriched in low complexity; the sequence is LPGRDGLPGAPGAP. Residues 84–93 are compositionally biased toward basic and acidic residues; that stretch reads EHGDKGEPGE. Residues 132–248 enclose the C-type lectin domain; the sequence is LSVGDKVFST…LQYRLAICEF (117 aa). 2 disulfide bridges follow: C155-C246 and C224-C238. N207 carries an N-linked (GlcNAc...) asparagine glycan. Residues E215, R217, N234, and D235 each coordinate Ca(2+).

It belongs to the SFTPA family. As to quaternary structure, oligomeric complex of 6 set of homotrimers.

It localises to the secreted. The protein localises to the extracellular space. Its subcellular location is the extracellular matrix. The protein resides in the surface film. In terms of biological role, in presence of calcium ions, it binds to surfactant phospholipids and contributes to lower the surface tension at the air-liquid interface in the alveoli of the mammalian lung and is essential for normal respiration. Enhances the expression of MYO18A/SP-R210 on alveolar macrophages. The polypeptide is Pulmonary surfactant-associated protein A (Sftpa1) (Mus musculus (Mouse)).